A 520-amino-acid chain; its full sequence is Peptide chain release factor 3 (520 aa).

A tr-type G domain is found at 8–277; sequence ESRKTFAIIS…HAPMPNARQT (270 aa). Residues 17–24, 85–89, and 139–142 each bind GTP; these read SHPDAGKT, DTPGH, and NKLD.

This sequence belongs to the TRAFAC class translation factor GTPase superfamily. Classic translation factor GTPase family. PrfC subfamily.

The protein resides in the cytoplasm. Functionally, increases the formation of ribosomal termination complexes and stimulates activities of RF-1 and RF-2. It binds guanine nucleotides and has strong preference for UGA stop codons. It may interact directly with the ribosome. The stimulation of RF-1 and RF-2 is significantly reduced by GTP and GDP, but not by GMP. This chain is Peptide chain release factor 3, found in Staphylococcus haemolyticus (strain JCSC1435).